A 410-amino-acid chain; its full sequence is Serine hydroxymethyltransferase (410 aa).

(6S)-5,6,7,8-tetrahydrofolate contacts are provided by residues Leu119 and Gly123–Leu125. Position 228 is an N6-(pyridoxal phosphate)lysine (Lys228). Position 351-353 (Ser351–Phe353) interacts with (6S)-5,6,7,8-tetrahydrofolate.

The protein belongs to the SHMT family. As to quaternary structure, homodimer. Pyridoxal 5'-phosphate serves as cofactor.

It localises to the cytoplasm. It carries out the reaction (6R)-5,10-methylene-5,6,7,8-tetrahydrofolate + glycine + H2O = (6S)-5,6,7,8-tetrahydrofolate + L-serine. It functions in the pathway one-carbon metabolism; tetrahydrofolate interconversion. It participates in amino-acid biosynthesis; glycine biosynthesis; glycine from L-serine: step 1/1. In terms of biological role, catalyzes the reversible interconversion of serine and glycine with tetrahydrofolate (THF) serving as the one-carbon carrier. This reaction serves as the major source of one-carbon groups required for the biosynthesis of purines, thymidylate, methionine, and other important biomolecules. Also exhibits THF-independent aldolase activity toward beta-hydroxyamino acids, producing glycine and aldehydes, via a retro-aldol mechanism. In Clostridium perfringens (strain 13 / Type A), this protein is Serine hydroxymethyltransferase.